The sequence spans 265 residues: Phosphate import ATP-binding protein PstB 1 (265 aa).

Positions 20-260 (LSTNDLSVLY…PKGKITEDYI (241 aa)) constitute an ABC transporter domain. ATP is bound at residue 53–60 (GASGSGKS).

The protein belongs to the ABC transporter superfamily. Phosphate importer (TC 3.A.1.7) family. In terms of assembly, the complex is composed of two ATP-binding proteins (PstB), two transmembrane proteins (PstC and PstA) and a solute-binding protein (PstS).

The protein localises to the cell membrane. The enzyme catalyses phosphate(out) + ATP + H2O = ADP + 2 phosphate(in) + H(+). Part of the ABC transporter complex PstSACB involved in phosphate import. Responsible for energy coupling to the transport system. The chain is Phosphate import ATP-binding protein PstB 1 from Lactobacillus acidophilus (strain ATCC 700396 / NCK56 / N2 / NCFM).